Reading from the N-terminus, the 78-residue chain is Large ribosomal subunit protein uL30 (78 aa).

The span at 58–68 (DDTSPDAETGA) shows a compositional bias: acidic residues. Positions 58–78 (DDTSPDAETGADLERDGGNRS) are disordered. A compositionally biased stretch (basic and acidic residues) spans 69–78 (DLERDGGNRS).

This sequence belongs to the universal ribosomal protein uL30 family. Part of the 50S ribosomal subunit.

This is Large ribosomal subunit protein uL30 from Roseiflexus sp. (strain RS-1).